We begin with the raw amino-acid sequence, 483 residues long: GTPase Obg (483 aa).

Residues 2–159 (SRFIDRVVLH…RDLVLELKSV (158 aa)) enclose the Obg domain. Residues 160 to 340 (ADVGLLGFPS…LTFALAKMVR (181 aa)) form the OBG-type G domain. GTP is bound by residues 166–173 (GFPSAGKS), 191–195 (FTTLV), 212–215 (DVPG), 292–295 (NKTD), and 321–323 (SAV). Residues S173 and T193 each coordinate Mg(2+). Positions 358-438 (PVKVKDSSFT…IGDVSFEWEP (81 aa)) constitute an OCT domain.

It belongs to the TRAFAC class OBG-HflX-like GTPase superfamily. OBG GTPase family. In terms of assembly, monomer. Mg(2+) serves as cofactor.

Its subcellular location is the cytoplasm. An essential GTPase which binds GTP, GDP and possibly (p)ppGpp with moderate affinity, with high nucleotide exchange rates and a fairly low GTP hydrolysis rate. Plays a role in control of the cell cycle, stress response, ribosome biogenesis and in those bacteria that undergo differentiation, in morphogenesis control. The sequence is that of GTPase Obg from Rhodococcus erythropolis (strain PR4 / NBRC 100887).